A 728-amino-acid polypeptide reads, in one-letter code: Catalase-peroxidase 1 (728 aa).

Residues 91 to 218 (WHSAGTYRTA…LAAVQMGLIY (128 aa)) constitute a cross-link (tryptophyl-tyrosyl-methioninium (Trp-Tyr) (with M-244)). Histidine 92 functions as the Proton acceptor in the catalytic mechanism. The segment at residues 218–244 (YVNPEGPDGNPDPVAAAHDIRETFARM) is a cross-link (tryptophyl-tyrosyl-methioninium (Tyr-Met) (with W-91)). Histidine 259 lines the heme b pocket.

It belongs to the peroxidase family. Peroxidase/catalase subfamily. As to quaternary structure, homodimer or homotetramer. Heme b serves as cofactor. In terms of processing, formation of the three residue Trp-Tyr-Met cross-link is important for the catalase, but not the peroxidase activity of the enzyme.

It catalyses the reaction H2O2 + AH2 = A + 2 H2O. The enzyme catalyses 2 H2O2 = O2 + 2 H2O. In terms of biological role, bifunctional enzyme with both catalase and broad-spectrum peroxidase activity. This Burkholderia cenocepacia (strain HI2424) protein is Catalase-peroxidase 1.